The following is a 315-amino-acid chain: Probable cell division protein kinase ECU11_1290 (315 aa).

A Protein kinase domain is found at 13–294 (YEKVCRISSG…ASQGLCSGFV (282 aa)). ATP contacts are provided by residues 19–27 (ISSGSFGNV) and Lys-42. Asp-138 serves as the catalytic Proton acceptor.

This sequence belongs to the protein kinase superfamily. CMGC Ser/Thr protein kinase family. CDC2/CDKX subfamily.

The protein localises to the nucleus. It catalyses the reaction L-seryl-[protein] + ATP = O-phospho-L-seryl-[protein] + ADP + H(+). The enzyme catalyses L-threonyl-[protein] + ATP = O-phospho-L-threonyl-[protein] + ADP + H(+). Its function is as follows. May play a role in the control of the eukaryotic cell cycle. This Encephalitozoon cuniculi (strain GB-M1) (Microsporidian parasite) protein is Probable cell division protein kinase ECU11_1290.